The chain runs to 374 residues: Pulmonary surfactant-associated protein D (374 aa).

The N-terminal stretch at 1-19 is a signal peptide; it reads MLPFLSMLVLLVQPLGNLG. Cysteine 34 and cysteine 39 each carry S-nitrosocysteine. Residues 38–222 form a disordered region; that stretch reads MCSPTENGLP…GIKGESGLPD (185 aa). The Collagen-like domain occupies 45–221; the sequence is GLPGRDGRDG…RGIKGESGLP (177 aa). Residues 49–64 show a composition bias toward basic and acidic residues; sequence RDGRDGREGPRGEKGD. The span at 70–79 shows a compositional bias: low complexity; it reads PMGLSGLQGP. A glycan (N-linked (GlcNAc...) asparagine) is linked at asparagine 89. Composition is skewed to low complexity over residues 137 to 149 and 169 to 200; these read KGEA…VGAP and APGV…RGPP. A compositionally biased stretch (basic and acidic residues) spans 203–215; sequence KGDRGVPGDRGIK. The stretch at 222-253 forms a coiled coil; the sequence is DSAALRQQMEALKGKLQRLEVAFSHYQKAALF. A C-type lectin domain is found at 259 to 374; the sequence is VGDKIFRTAD…GEQRLVICEF (116 aa). 2 disulfide bridges follow: cysteine 280–cysteine 372 and cysteine 350–cysteine 364.

Belongs to the SFTPD family. Oligomeric complex of 4 set of homotrimers. Post-translationally, S-nitrosylation at Cys-34 and Cys-39 alters the quaternary structure which results in a pro-inflammatory chemoattractive signaling activity with macrophages.

Its subcellular location is the secreted. The protein localises to the extracellular space. It is found in the extracellular matrix. The protein resides in the surface film. In terms of biological role, contributes to the lung's defense against inhaled microorganisms, organic antigens and toxins. Interacts with compounds such as bacterial lipopolysaccharides, oligosaccharides and fatty acids and modulates leukocyte action in immune response. May participate in the extracellular reorganization or turnover of pulmonary surfactant. Binds strongly maltose residues and to a lesser extent other alpha-glucosyl moieties. This is Pulmonary surfactant-associated protein D (Sftpd) from Mus musculus (Mouse).